The sequence spans 155 residues: Small ribosomal subunit protein uS7 (155 aa).

It belongs to the universal ribosomal protein uS7 family. Part of the 30S ribosomal subunit. Contacts proteins S9 and S11.

One of the primary rRNA binding proteins, it binds directly to 16S rRNA where it nucleates assembly of the head domain of the 30S subunit. Is located at the subunit interface close to the decoding center, probably blocks exit of the E-site tRNA. The protein is Small ribosomal subunit protein uS7 of Helicobacter acinonychis (strain Sheeba).